The chain runs to 395 residues: Ribosomal RNA small subunit methyltransferase H (395 aa).

Residues 101–103, Asp120, Tyr147, Asp171, and Gln178 each bind S-adenosyl-L-methionine; that span reads GGH.

It belongs to the methyltransferase superfamily. RsmH family.

It is found in the cytoplasm. It catalyses the reaction cytidine(1402) in 16S rRNA + S-adenosyl-L-methionine = N(4)-methylcytidine(1402) in 16S rRNA + S-adenosyl-L-homocysteine + H(+). In terms of biological role, specifically methylates the N4 position of cytidine in position 1402 (C1402) of 16S rRNA. The polypeptide is Ribosomal RNA small subunit methyltransferase H (Mycobacterium ulcerans (strain Agy99)).